A 152-amino-acid polypeptide reads, in one-letter code: SsrA-binding protein (152 aa).

Belongs to the SmpB family.

The protein resides in the cytoplasm. Its function is as follows. Required for rescue of stalled ribosomes mediated by trans-translation. Binds to transfer-messenger RNA (tmRNA), required for stable association of tmRNA with ribosomes. tmRNA and SmpB together mimic tRNA shape, replacing the anticodon stem-loop with SmpB. tmRNA is encoded by the ssrA gene; the 2 termini fold to resemble tRNA(Ala) and it encodes a 'tag peptide', a short internal open reading frame. During trans-translation Ala-aminoacylated tmRNA acts like a tRNA, entering the A-site of stalled ribosomes, displacing the stalled mRNA. The ribosome then switches to translate the ORF on the tmRNA; the nascent peptide is terminated with the 'tag peptide' encoded by the tmRNA and targeted for degradation. The ribosome is freed to recommence translation, which seems to be the essential function of trans-translation. The chain is SsrA-binding protein from Rickettsia akari (strain Hartford).